The following is a 594-amino-acid chain: Probable acyl-CoA dehydrogenase (594 aa).

The active-site Proton acceptor is E405.

The protein belongs to the acyl-CoA dehydrogenase family. It depends on FAD as a cofactor.

It carries out the reaction a 2,3-saturated acyl-CoA + A = a 2,3-dehydroacyl-CoA + AH2. It functions in the pathway lipid metabolism; fatty acid beta-oxidation. In terms of biological role, involved in the degradation of long-chain fatty acids. This Bacillus subtilis (strain 168) protein is Probable acyl-CoA dehydrogenase (fadE).